A 118-amino-acid polypeptide reads, in one-letter code: SPbeta prophage-derived uncharacterized protein YomS (118 aa).

The protein is SPbeta prophage-derived uncharacterized protein YomS (yomS) of Bacillus subtilis (strain 168).